We begin with the raw amino-acid sequence, 298 residues long: GTPase Era (298 aa).

One can recognise an Era-type G domain in the interval 8-176; it reads RSGSVAVIGR…VSDLLKLVPE (169 aa). The G1 stretch occupies residues 16 to 23; the sequence is GRPNVGKS. A GTP-binding site is contributed by 16–23; sequence GRPNVGKS. The interval 42–46 is G2; that stretch reads QTTRH. Residues 63–66 form a G3 region; the sequence is DTPG. Residues 63–67 and 125–128 each bind GTP; these read DTPGL and NKVD. The interval 125–128 is G4; sequence NKVD. Residues 155 to 157 are G5; it reads VSA. The KH type-2 domain maps to 199–283; the sequence is VREQLMRQLG…FLETWVRVRE (85 aa).

This sequence belongs to the TRAFAC class TrmE-Era-EngA-EngB-Septin-like GTPase superfamily. Era GTPase family. In terms of assembly, monomer.

It localises to the cytoplasm. The protein resides in the cell inner membrane. Its function is as follows. An essential GTPase that binds both GDP and GTP, with rapid nucleotide exchange. Plays a role in 16S rRNA processing and 30S ribosomal subunit biogenesis and possibly also in cell cycle regulation and energy metabolism. In Xanthomonas campestris pv. campestris (strain 8004), this protein is GTPase Era.